Here is a 179-residue protein sequence, read N- to C-terminus: Bifunctional protein PyrR (179 aa).

The PRPP-binding signature appears at valine 99 to threonine 111.

Belongs to the purine/pyrimidine phosphoribosyltransferase family. PyrR subfamily. In terms of assembly, homodimer and homohexamer; in equilibrium.

The enzyme catalyses UMP + diphosphate = 5-phospho-alpha-D-ribose 1-diphosphate + uracil. Functionally, regulates transcriptional attenuation of the pyrimidine nucleotide (pyr) operon by binding in a uridine-dependent manner to specific sites on pyr mRNA. This disrupts an antiterminator hairpin in the RNA and favors formation of a downstream transcription terminator, leading to a reduced expression of downstream genes. Its function is as follows. Also displays a weak uracil phosphoribosyltransferase activity which is not physiologically significant. In Limosilactobacillus fermentum (strain NBRC 3956 / LMG 18251) (Lactobacillus fermentum), this protein is Bifunctional protein PyrR.